Consider the following 417-residue polypeptide: Maltodextrin-binding protein MdxE (417 aa).

The first 22 residues, 1–22 (MVLLKKGFAILAASFLAIGLAA), serve as a signal peptide directing secretion. Cys-23 is lipidated: N-palmitoyl cysteine. Cys-23 carries the S-diacylglycerol cysteine lipid modification.

Belongs to the bacterial solute-binding protein 1 family. In terms of assembly, the complex is composed of two ATP-binding proteins (MsmX), two transmembrane proteins (MdxF and MdxG) and a solute-binding protein (MdxE).

Its subcellular location is the cell membrane. Inhibited by glucose and lactose. In terms of biological role, part of the ABC transporter complex involved in maltodextrin import. Binds maltodextrin. Can also bind maltose with low affinity, but is not involved in its uptake. This chain is Maltodextrin-binding protein MdxE (mdxE), found in Bacillus subtilis (strain 168).